The primary structure comprises 245 residues: Galectin-3 (245 aa).

The segment at 1–30 is disordered; it reads MADGFSLNDALAGSGNPNPQGWPGAWGNQP. Ala2 is subject to N-acetylalanine. Ser6 is modified (phosphoserine; by CK1). 4 repeat units span residues 35 to 43, 44 to 52, 53 to 61, and 62 to 70. Residues 35–99 are 7 X 9 AA tandem repeats of Y-P-G-X(3)-P-[GS]-A; it reads YPGASYPGAY…PSAPGAYPAA (65 aa). The interval 47–68 is disordered; sequence QAPPGAYPGQAPPGAYPGPTAP. A 5; approximate repeat occupies 71–78; sequence YPGPAPGA. One copy of the 6; approximate repeat lies at 79-88; it reads YPGQPGASGA. A 7; approximate repeat occupies 89–99; that stretch reads YPSAPGAYPAA. Residues 113-243 enclose the Galectin domain; that stretch reads YKLPLAGGVM…DITLTSAAPT (131 aa). 176–182 lines the a beta-D-galactoside pocket; that stretch reads WGREERQ. At Ser183 the chain carries Phosphoserine. The Nuclear export signal motif lies at 221–236; sequence KNLREINQMEISGDIT.

Probably forms homo- or heterodimers. Interacts with DMBT1. Interacts with CD6 and ALCAM. Forms a complex with the ITGA3, ITGB1 and CSPG4. Interacts with LGALS3BP, LYPD3, ZFTRAF1 and UACA. Interacts with TRIM16; this interaction mediates autophagy of damage endomembranes. Interacts with cargo receptor TMED10; the interaction mediates the translocation from the cytoplasm into the ERGIC (endoplasmic reticulum-Golgi intermediate compartment) and thereby secretion. Interacts with and inhibits by binding NCR3/NKp30.

Its subcellular location is the cytoplasm. It localises to the nucleus. The protein localises to the secreted. In terms of biological role, galactose-specific lectin which binds IgE. May mediate with the alpha-3, beta-1 integrin the stimulation by CSPG4 of endothelial cells migration. Together with DMBT1, required for terminal differentiation of columnar epithelial cells during early embryogenesis. In the nucleus: acts as a pre-mRNA splicing factor. Involved in acute inflammatory responses including neutrophil activation and adhesion, chemoattraction of monocytes macrophages, opsonization of apoptotic neutrophils, and activation of mast cells. Together with TRIM16, coordinates the recognition of membrane damage with mobilization of the core autophagy regulators ATG16L1 and BECN1 in response to damaged endomembranes. When secreted, interacts with NK cell-activating receptor NCR3/NKp30 acting as an inhibitory ligand which antagonizes NK cell attack. The protein is Galectin-3 (LGALS3) of Cricetulus longicaudatus (Long-tailed dwarf hamster).